An 82-amino-acid polypeptide reads, in one-letter code: Putative membrane protein insertion efficiency factor (82 aa).

The protein belongs to the UPF0161 family.

The protein localises to the cell inner membrane. Could be involved in insertion of integral membrane proteins into the membrane. The sequence is that of Putative membrane protein insertion efficiency factor from Rickettsia peacockii (strain Rustic).